We begin with the raw amino-acid sequence, 46 residues long: Photosystem II reaction center protein K (46 aa).

A propeptide spanning residues 1 to 9 (MLILLNTFA) is cleaved from the precursor. Residues 25–45 (LPLIPLFFFLLVFVWQAAVGF) form a helical membrane-spanning segment.

It belongs to the PsbK family. PSII is composed of 1 copy each of membrane proteins PsbA, PsbB, PsbC, PsbD, PsbE, PsbF, PsbH, PsbI, PsbJ, PsbK, PsbL, PsbM, PsbT, PsbX, PsbY, Psb30/Ycf12, peripheral proteins PsbO, CyanoQ (PsbQ), PsbU, PsbV and a large number of cofactors. It forms dimeric complexes.

The protein localises to the cellular thylakoid membrane. Functionally, one of the components of the core complex of photosystem II (PSII). PSII is a light-driven water:plastoquinone oxidoreductase that uses light energy to abstract electrons from H(2)O, generating O(2) and a proton gradient subsequently used for ATP formation. It consists of a core antenna complex that captures photons, and an electron transfer chain that converts photonic excitation into a charge separation. The sequence is that of Photosystem II reaction center protein K from Prochlorococcus marinus (strain MIT 9215).